We begin with the raw amino-acid sequence, 260 residues long: MGILKGKKILITGILNEKSIAFGIAKSMYKQEAELIFVCQNKKIINKIKYLIKSINYNTIFFCDVSHDENIKELFFNIKKVWNNFDGLVHSIAYCPKKQMHEDFVESSSRKSFNICHEISSYSFLSMARECKNMLNKFSSLVTLSYLGSQKIVSNYNMMGLAKSSLEANVRYMANSLGKNNIRVNAISSGPIKTTSSYQIKNFNKIQKIHKLFSLTKNHVSSEEIGNVAAFLCSDLSIGITGSIINVDHGFNLNGINSII.

Residues glycine 13, 19-20 (SI), glutamine 40, 64-65 (DV), and isoleucine 92 each bind NAD(+). Active-site proton acceptor residues include tyrosine 146 and tyrosine 156. NAD(+) is bound by residues lysine 163 and 192–196 (IKTTS).

Belongs to the short-chain dehydrogenases/reductases (SDR) family. FabI subfamily. In terms of assembly, homotetramer.

The enzyme catalyses a 2,3-saturated acyl-[ACP] + NAD(+) = a (2E)-enoyl-[ACP] + NADH + H(+). Its pathway is lipid metabolism; fatty acid biosynthesis. It functions in the pathway cofactor biosynthesis; biotin biosynthesis. Functionally, catalyzes the reduction of a carbon-carbon double bond in an enoyl moiety that is covalently linked to an acyl carrier protein (ACP). Involved in the elongation cycle of fatty acid which are used in the lipid metabolism and in the biotin biosynthesis. This is Enoyl-[acyl-carrier-protein] reductase [NADH] FabI (fabI) from Buchnera aphidicola subsp. Schizaphis graminum (strain Sg).